A 54-amino-acid chain; its full sequence is uncharacterized protein (54 aa).

A helical transmembrane segment spans residues 21–43 (SYVVCLYMCGSDCACICVLACVV).

It is found in the membrane. This is an uncharacterized protein from Saccharomyces cerevisiae (strain ATCC 204508 / S288c) (Baker's yeast).